The following is a 304-amino-acid chain: Voltage-dependent anion channel-forming protein YneE (304 aa).

Transmembrane regions (helical) follow at residues leucine 28 to leucine 48, isoleucine 50 to phenylalanine 70, alanine 209 to leucine 229, and tyrosine 235 to alanine 255.

Belongs to the anion channel-forming bestrophin (TC 1.A.46) family.

It localises to the cell membrane. This Salmonella typhi protein is Voltage-dependent anion channel-forming protein YneE (yneE).